Here is a 1104-residue protein sequence, read N- to C-terminus: Collagenase ColA (1104 aa).

The first 39 residues, methionine 1–alanine 39, serve as a signal peptide directing secretion. The propeptide occupies alanine 40 to arginine 86. The tract at residues alanine 87–methionine 761 is S1 metalloprotease domain. The segment at tyrosine 93–glycine 367 is activator domain. Positions aspartate 377 to asparagine 646 are catalytic subdomain. Glutamate 477 is a Ca(2+) binding site. A Zn(2+)-binding site is contributed by histidine 502. The active site involves glutamate 503. Histidine 506 provides a ligand contact to Zn(2+). 3 residues coordinate Ca(2+): glycine 510, valine 514, and glycine 516. Glutamate 534 serves as a coordination point for Zn(2+). Residues aspartate 654–threonine 767 form a helper subdomain region. Residues asparagine 762–proline 860 are S2 domain. Residues asparagine 772, lysine 773, aspartate 800, aspartate 802, aspartate 841, glutamate 866, glutamate 868, asparagine 870, aspartate 894, aspartate 897, glutamate 993, glutamate 995, asparagine 997, leucine 1016, aspartate 1020, lysine 1022, and aspartate 1023 each coordinate Ca(2+). In terms of domain architecture, PKD spans glutamate 774–glutamate 862. Positions asparagine 865–leucine 979 are S3a collagen-binding domain. Residues lysine 992–lysine 1104 form an S3b collagen-binding domain region.

The protein belongs to the peptidase M9B family. Collagenase subfamily. Requires Ca(2+) as cofactor. The cofactor is Zn(2+).

Its subcellular location is the secreted. It carries out the reaction Digestion of native collagen in the triple helical region at Xaa-|-Gly bonds. With synthetic peptides, a preference is shown for Gly at P3 and P1', Pro and Ala at P2 and P2', and hydroxyproline, Ala or Arg at P3'.. Clostridial collagenases are among the most efficient degraders of eukaryotic collagen known; saprophytes use collagen as a carbon source while pathogens additionally digest collagen to aid in host colonization. Has both tripeptidylcarboxypeptidase on Gly-X-Y and endopeptidase activities; the endopeptidase cuts within the triple helix region of collagen while tripeptidylcarboxypeptidase successively digests the exposed ends, thus clostridial collagenases can digest large sections of collagen. The protein is Collagenase ColA (colA) of Clostridium perfringens (strain 13 / Type A).